Here is a 698-residue protein sequence, read N- to C-terminus: Vertnin (698 aa).

It belongs to the vertnin family.

Its subcellular location is the nucleus. Acts as a transcription factor that regulates development of thoracic vertebrae. The protein is Vertnin (VRTN) of Sus scrofa (Pig).